Reading from the N-terminus, the 332-residue chain is UPF0194 membrane protein YbhG (332 aa).

The first 16 residues, 1–16, serve as a signal peptide directing secretion; sequence MMKKPVVIGLAVVVLA. Residues 108 to 209 are a coiled coil; sequence EEIAQAAAAV…LNLQDSTLIA (102 aa).

This sequence belongs to the UPF0194 family.

The protein localises to the periplasm. This Escherichia coli O127:H6 (strain E2348/69 / EPEC) protein is UPF0194 membrane protein YbhG.